The primary structure comprises 351 residues: DNA nickase (351 aa).

Residues His241, Glu245, and His303 each contribute to the Fe cation site.

Its function is as follows. Acts as a DNA nickase. The chain is DNA nickase from Nostoc sp. (strain PCC 7120 / SAG 25.82 / UTEX 2576).